The primary structure comprises 43 residues: Protein PsbN (43 aa).

Residues 3–23 traverse the membrane as a helical segment; the sequence is IATLVAIFISGLLVSFTGYAL.

This sequence belongs to the PsbN family.

The protein localises to the plastid. It localises to the chloroplast thylakoid membrane. May play a role in photosystem I and II biogenesis. The chain is Protein PsbN from Euonymus alatus (Burning bush).